Here is a 113-residue protein sequence, read N- to C-terminus: Phosphoribosyl-ATP pyrophosphatase (113 aa).

Belongs to the PRA-PH family.

The protein localises to the cytoplasm. It carries out the reaction 1-(5-phospho-beta-D-ribosyl)-ATP + H2O = 1-(5-phospho-beta-D-ribosyl)-5'-AMP + diphosphate + H(+). It functions in the pathway amino-acid biosynthesis; L-histidine biosynthesis; L-histidine from 5-phospho-alpha-D-ribose 1-diphosphate: step 2/9. This is Phosphoribosyl-ATP pyrophosphatase from Hydrogenovibrio crunogenus (strain DSM 25203 / XCL-2) (Thiomicrospira crunogena).